The primary structure comprises 1109 residues: MADGPRCKRRKQANPRRNNVTNYNTVVEANSDSDDEDKLHIVEEESVTDAADCEGGVPDDELPTDQTVLPGGSDRAGSAKNCWQDDVKDDECDSDAENEQNHDPNVEEFLQQQDTAVIYPEAPEEDQRQGTPEASGHDDNGTPDAFSQLLTCPYCDRGYKRFTSLKEHIKYRHEKNEDNFSCSLCSYTFAYRTQLERHMTSHKSGREQRHVTQSGGNRKFKCTECGKAFKYKHHLKEHLRIHSGEKPYECPNCKKRFSHSGSYSSHISSKKCISLMPVNGRPRSGLKTSQCSSPSLSTSPGSPTRPQIRQKIENKPLQEPLSVNQIKTEPVDYEFKPIVVASGINCSTPLQNGVFSGGGQLQATSSPQGVVQAVVLPTVGLVSPISINLSDIQNVLKVAVDGNIIRQVLENNQASLASKEQEAVSASSIQQGGHSVISAISLPLVDQDGTTKIIINYSLEQPGQLQVVPQNLKKENPAPPKSCKSEKSPEDLTVKSEKDKSFDGAADESTCLLCEDCPGDLNALPELKHYDPEHPAQPPPPAPATEKPESSASSAGNGDLSPSQPPLKNLLSLLKAYYALNAQPSTEELTKIADSVNLPLDVVKKWFEKMQAGQIPGQSLEPPSPGPGSGNIPAKTEEQPQPVDGNEPQEDSTRGQSPLKMTSSPVLPVGSAINGSRSCTSSPSPLNLSSARNPQGYSCVSEGTQEEPQVEPLDLSLPKQQGELLERSTVSSVYQNSVYSVQEEPLNLSCAKKEPQKDSCVTDSEPVVNVVPPSANPINIAIPTVTAQLPTIVAIADQNSVPCLRALAANKQTILIPQVAYTYSATVSPAMQEPPVKVIQPNGNQDERQDTSSEGVSVEDQNDSDCTPPKKKTRKAENGMYACDLCDKIFQKSSSLLRHKYEHTGKRPHECGICRKAFKHKHHLIEHMRLHSGEKPYQCDKCGKRFSHSGSYSQHMNHRYSYCKRGAEDRDAMEQEDTGPEALPEVLPTELVGARASPSQADSDERESLTREEDEDSEKEEEEEDKEMEELQEDKECENPQEEEEEEEEEEEEEEEEEEEEAEEAEHEAAAAKTGGAVEEEAAQQAGSFQQKASGSESKRLSEEKTNEA.

2 disordered regions span residues 1–106 (MADG…DPNV) and 123–143 (PEED…NGTP). Residues 15–30 (PRRNNVTNYNTVVEAN) show a composition bias toward low complexity. Residues serine 31 and serine 33 each carry the phosphoserine modification. Positions 87 to 98 (VKDDECDSDAEN) are enriched in acidic residues. A C2H2-type 1 zinc finger spans residues 150 to 173 (LTCPYCDRGYKRFTSLKEHIKYRH). Glycyl lysine isopeptide (Lys-Gly) (interchain with G-Cter in SUMO2) cross-links involve residues lysine 166 and lysine 175. 2 consecutive C2H2-type zinc fingers follow at residues 180 to 202 (FSCS…MTSH) and 220 to 242 (FKCT…LRIH). A C2H2-type 4; atypical zinc finger spans residues 248–272 (YECPNCKKRFSHSGSYSSHISSKKC). The disordered stretch occupies residues 278-307 (VNGRPRSGLKTSQCSSPSLSTSPGSPTRPQ). Lysine 287 participates in a covalent cross-link: Glycyl lysine isopeptide (Lys-Gly) (interchain with G-Cter in SUMO2). The segment covering 288-304 (TSQCSSPSLSTSPGSPT) has biased composition (low complexity). 2 positions are modified to phosphoserine: serine 293 and serine 302. Glycyl lysine isopeptide (Lys-Gly) (interchain with G-Cter in SUMO2) cross-links involve residues lysine 311 and lysine 315. Lysine 327 participates in a covalent cross-link: Glycyl lysine isopeptide (Lys-Gly) (interchain with G-Cter in SUMO); alternate. Lysine 327 participates in a covalent cross-link: Glycyl lysine isopeptide (Lys-Gly) (interchain with G-Cter in SUMO2); alternate. Glycyl lysine isopeptide (Lys-Gly) (interchain with G-Cter in SUMO2) cross-links involve residues lysine 419, lysine 473, lysine 484, lysine 495, and lysine 528. 3 disordered regions span residues 468–501 (VPQN…KDKS), 525–566 (PELK…SQPP), and 614–711 (QIPG…PQVE). A compositionally biased stretch (basic and acidic residues) spans 483–501 (CKSEKSPEDLTVKSEKDKS). The homeobox; atypical DNA-binding region spans 559 to 618 (DLSPSQPPLKNLLSLLKAYYALNAQPSTEELTKIADSVNLPLDVVKKWFEKMQAGQIPGQ). Polar residues predominate over residues 654–665 (RGQSPLKMTSSP). A phosphoserine mark is found at serine 657, serine 664, serine 671, and serine 678. Positions 673 to 703 (INGSRSCTSSPSPLNLSSARNPQGYSCVSEG) are enriched in polar residues. Threonine 680 carries the post-translational modification Phosphothreonine. Serine 682 bears the Phosphoserine mark. A Glycyl lysine isopeptide (Lys-Gly) (interchain with G-Cter in SUMO); alternate cross-link involves residue lysine 752. Lysine 752 is covalently cross-linked (Glycyl lysine isopeptide (Lys-Gly) (interchain with G-Cter in SUMO2); alternate). Residues 834–873 (PPVKVIQPNGNQDERQDTSSEGVSVEDQNDSDCTPPKKKT) form a disordered region. 2 C2H2-type zinc fingers span residues 881-903 (YACD…KYEH) and 909-931 (HECG…MRLH). Residues 937 to 958 (YQCDKCGKRFSHSGSYSQHMNH) form a C2H2-type 7; atypical zinc finger. The segment at 968 to 1109 (EDRDAMEQED…RLSEEKTNEA (142 aa)) is disordered. Over residues 1012–1066 (EEDEDSEKEEEEEDKEMEELQEDKECENPQEEEEEEEEEEEEEEEEEEEEAEEAE) the composition is skewed to acidic residues. Residues 1071-1087 (AAKTGGAVEEEAAQQAG) show a composition bias toward low complexity. Residues 1097 to 1109 (ESKRLSEEKTNEA) are compositionally biased toward basic and acidic residues.

The protein belongs to the delta-EF1/ZFH-1 C2H2-type zinc-finger family. Interacts (via N-terminus) with SMARCA4/BRG1. Post-translationally, ubiquitinated, leading to degradation in a proteasome-dependent manner. Deubiquitinated by USP51, leading to stabilization.

The protein resides in the nucleus. Acts as a transcriptional repressor. Binds to E-box sequences in the immunoglobulin heavy chain enhancer as well as in the regulatory regions of many other tissue-specific genes. Represses E-cadherin promoter and induces an epithelial-mesenchymal transition (EMT) by recruiting SMARCA4/BRG1. Represses BCL6 transcription in the presence of the corepressor CTBP1. Positively regulates neuronal differentiation. Represses RCOR1 transcription activation during neurogenesis. Represses transcription by binding to the E box (5'-CANNTG-3'). In the absence of TGFB1, acts as a repressor of COL1A2 transcription via binding to the E-box in the upstream enhancer region. This Rattus norvegicus (Rat) protein is Zinc finger E-box-binding homeobox 1.